Consider the following 275-residue polypeptide: Non-heme chloroperoxidase CPO-A1 (275 aa).

Residues 22-255 form the AB hydrolase-1 domain; that stretch reads PVVFIHGWPL…KVYEGSSHGI (234 aa). Residues Ser95, Asp224, and His253 each act as charge relay system in the active site.

Belongs to the AB hydrolase superfamily. Bacterial non-heme haloperoxidase / perhydrolase family. As to quaternary structure, homodimer.

With respect to regulation, brominating activity not inhibited by azide, peroxidase activity stimulated by bromide. In terms of biological role, may be a chlorinating enzyme involved in 7-chlorotetracycline biosynthesis. Able to brominate as well. In Kitasatospora aureofaciens (Streptomyces aureofaciens), this protein is Non-heme chloroperoxidase CPO-A1 (bpoA1).